The chain runs to 265 residues: Probable FAD synthase (265 aa).

The protein belongs to the PAPS reductase family. FAD1 subfamily.

The catalysed reaction is FMN + ATP + H(+) = FAD + diphosphate. The protein operates within cofactor biosynthesis; FAD biosynthesis; FAD from FMN: step 1/1. Its function is as follows. Adenylates FMN to FAD. The chain is Probable FAD synthase from Schizosaccharomyces pombe (strain 972 / ATCC 24843) (Fission yeast).